A 546-amino-acid chain; its full sequence is Sterol O-acyltransferase 1 (546 aa).

M1 carries the N-acetylmethionine modification. Residues 1 to 37 (MVGEEKMSLRNRLSKSGENPEQDEAQRSVSDTQSNGR) form a disordered region. Residues 1-134 (MVGEEKMSLR…LDELFEVDHI (134 aa)) are Cytoplasmic-facing. S8 bears the Phosphoserine mark. Over residues 27 to 37 (RSVSDTQSNGR) the composition is skewed to polar residues. H133 serves as a coordination point for cholesterol. Residues 135-156 (RTIYHMFIGLLILFILSTLVVD) traverse the membrane as a helical segment. The Lumenal segment spans residues 157–176 (YIDEGRLVLEFNLLGYAFGK). The chain crosses the membrane as a helical span at residues 177–202 (LPTVIWTWWAMFLSTLSIPYFLFQRW). At 203–214 (AHGYSKTSHPLI) the chain is on the cytoplasmic side. Residues 215 to 240 (YSLSHGFFFLVFQLGILGFVPTYVVL) form a helical membrane-spanning segment. The Lumenal segment spans residues 241 to 248 (AYTLPPAS). The helical transmembrane segment at 249–272 (RFIVILEQIRMVMKAHSFVRENVP) threads the bilayer. Residues 273-315 (RVLNAAKEKSSTVPVPTVNQYLYFLFAPTLIYRDSYPRTPTVR) lie on the Cytoplasmic side of the membrane. A helical transmembrane segment spans residues 316 to 348 (WGYVAVQFLQVFGCLFYVYYIFERLCAPLFRNI). Over 349–365 (KQEPFSARVLVLCVFNS) the chain is Lumenal. The chain crosses the membrane as a helical span at residues 366-391 (ILPGVLMLFLTFFAFLHCWLNAFAEM). The Cytoplasmic segment spans residues 392–439 (LRFGDRMFYKDWWNSTSYSNYYRTWNVVVHDWLYYYAYKDLLWFFSKR). An FYXDWWN motif motif is present at residues 399–405 (FYKDWWN). Residues N411, R414, N417, H421, Y429, K441, and S452 each contribute to the an acyl-CoA site. Residues 440-464 (FKSAAMLAVFALSAVVHEYALAVCL) form a helical membrane-spanning segment. H456 is a catalytic residue. The Lumenal portion of the chain corresponds to 465-470 (SYFYPV). A helical membrane pass occupies residues 471–486 (LFVLFMFFGMAFNFIV). Over 487 to 492 (NDSRKR) the chain is Cytoplasmic. Residues 493–524 (PIWNIMVWASLFLGHGVILCFYSQEWYARQHC) traverse the membrane as a helical segment. A disulfide bridge links C524 with C542. Residues 525 to 546 (PLKNPTFLDYVRPRSWTCQYVF) are Lumenal-facing.

Belongs to the membrane-bound acyltransferase family. Sterol o-acyltransferase subfamily. May form homo- or heterodimers. Interacts with UBIAD1.

The protein localises to the endoplasmic reticulum membrane. The enzyme catalyses a sterol + a long-chain fatty acyl-CoA = a long-chain 3-hydroxysterol ester + CoA. The catalysed reaction is cholesterol + an acyl-CoA = a cholesterol ester + CoA. It carries out the reaction cholesterol + (9Z)-octadecenoyl-CoA = cholesteryl (9Z-octadecenoate) + CoA. It catalyses the reaction cholesterol + hexadecanoyl-CoA = cholesteryl hexadecanoate + CoA. The enzyme catalyses octadecanoyl-CoA + cholesterol = cholesteryl octadecanoate + CoA. The catalysed reaction is (9Z,12Z)-octadecadienoyl-CoA + cholesterol = cholesteryl (9Z,12Z)-octadecadienoate + CoA. It carries out the reaction (5Z,8Z,11Z,14Z)-eicosatetraenoyl-CoA + cholesterol = cholesteryl (5Z,8Z,11Z,14Z)-eicosatetraenoate + CoA. It catalyses the reaction (9Z)-hexadecenoyl-CoA + cholesterol = cholesteryl (9Z)-hexadecenoate + CoA. The enzyme catalyses (11Z)-octadecenoyl-CoA + cholesterol = cholesteryl (11Z)-octadecenoate + CoA. The catalysed reaction is (7Z)-octadecenoyl-CoA + cholesterol = cholesteryl (7Z)-octadecenoate + CoA. Its function is as follows. Catalyzes the formation of fatty acid-cholesterol esters, which are less soluble in membranes than cholesterol. Plays a role in lipoprotein assembly and dietary cholesterol absorption. Preferentially utilizes oleoyl-CoA ((9Z)-octadecenoyl-CoA) as a substrate: shows a higher activity towards an acyl-CoA substrate with a double bond at the delta-9 position (9Z) than towards saturated acyl-CoA or an unsaturated acyl-CoA with a double bond at the delta-7 (7Z) or delta-11 (11Z) positions. The polypeptide is Sterol O-acyltransferase 1 (SOAT1) (Cricetulus griseus (Chinese hamster)).